We begin with the raw amino-acid sequence, 66 residues long: Neurotoxin-like protein STR1 (66 aa).

The 64-residue stretch at 2–65 folds into the LCN-type CS-alpha/beta domain; it reads RDGYIVHDGT…VWGEDGFMCW (64 aa). Intrachain disulfides connect cysteine 13-cysteine 64, cysteine 17-cysteine 40, cysteine 26-cysteine 45, and cysteine 30-cysteine 47.

This sequence belongs to the long (4 C-C) scorpion toxin superfamily. Sodium channel inhibitor family. Beta subfamily. In terms of tissue distribution, expressed by the venom gland.

The protein resides in the secreted. Functionally, this protein is not toxic. This is Neurotoxin-like protein STR1 from Androctonus australis (Sahara scorpion).